The following is an 85-amino-acid chain: Protein Vpu (85 aa).

Residues 1–7 (MHHRDLL) lie on the Extracellular side of the membrane. The chain crosses the membrane as a helical span at residues 8–28 (AIIIISALLFINVILWGFILR). At 29 to 85 (KYLEQKEQDRKEREILERLRRIREIRDDSDYESNGEEEQEVMDLVLSHGFDNPMFEP) the chain is on the cytoplasmic side.

Belongs to the HIV-1 VPU protein family. As to quaternary structure, homopentamer. Interacts with host CD4 and BRTC; these interactions induce proteasomal degradation of CD4. Interacts with host BST2; this interaction leads to the degradation of host BST2. Interacts with host FBXW11. Interacts with host AP1M1; this interaction plays a role in the mistrafficking and subsequent degradation of host BST2. Interacts with host RANBP2; this interaction allows Vpu to down-regulate host BLM sumoylation. Phosphorylated by host CK2. This phosphorylation is necessary for interaction with human BTRC and degradation of CD4.

It is found in the host membrane. Ion channel activity is inhibited by hexamethylene amiloride in vitro. Functionally, enhances virion budding by targeting host CD4 and Tetherin/BST2 to proteasome degradation. Degradation of CD4 prevents any unwanted premature interactions between viral Env and its host receptor CD4 in the endoplasmic reticulum. Degradation of antiretroviral protein Tetherin/BST2 is important for virion budding, as BST2 tethers new viral particles to the host cell membrane. Mechanistically, Vpu bridges either CD4 or BST2 to BTRC, a substrate recognition subunit of the Skp1/Cullin/F-box protein E3 ubiquitin ligase, induces their ubiquitination and subsequent proteasomal degradation. The alteration of the E3 ligase specificity by Vpu seems to promote the degradation of host IKBKB, leading to NF-kappa-B down-regulation and subsequent apoptosis. Acts as a viroporin that forms an oligomeric ion channel in membranes. Modulates the host DNA repair mechanisms to promote degradation of nuclear viral cDNA in cells that are already productively infected in order to suppress immune sensing and proviral hyper-integration (superinfection). Manipulates PML-NBs and modulates SUMOylation of host BLM protein thereby enhancing its DNA-end processing activity toward viral unintegrated linear DNA. Also inhibits RAD52-mediated homologous repair of viral cDNA, preventing the generation of dead-end circular forms of single copies of the long terminal repeat and permitting sustained nucleolytic attack. In Human immunodeficiency virus type 1 group O (isolate ANT70) (HIV-1), this protein is Protein Vpu.